We begin with the raw amino-acid sequence, 682 residues long: Probable glycosyl transferase Gly (682 aa).

UDP-binding positions include 21–26 and 112–113; these read CASFSD and DC. Mn(2+)-binding residues include D112, D114, and H230. Residue 230–236 participates in UDP binding; it reads HYLPERK.

It belongs to the glycosyltransferase 8 family. In terms of assembly, part of the accessory SecA2/SecY2 protein translocation apparatus required to export cell wall protein GspB.

Functionally, part of the accessory SecA2/SecY2 system specifically required to export GspB, a serine-rich repeat cell wall protein encoded upstream in the same operon. In Streptococcus gordonii, this protein is Probable glycosyl transferase Gly (gly).